The primary structure comprises 588 residues: NADP-dependent malic enzyme 2 (588 aa).

Residues 1–21 form a disordered region; sequence MGSTPTDLPGEDVADNRSGVG. At Gly2 the chain carries N-acetylglycine. Tyr136 functions as the Proton donor in the catalytic mechanism. NADP(+) is bound at residue Arg189. Residue Lys207 is the Proton acceptor of the active site. A divalent metal cation contacts are provided by Glu279, Asp280, and Asp303. NADP(+) is bound by residues Asp303, 332–348, and Asn444; that span reads LFLG…ELIA.

This sequence belongs to the malic enzymes family. In terms of assembly, homohexamers and homooctamers. Mg(2+) serves as cofactor. It depends on Mn(2+) as a cofactor. Expressed in leaves, stems, flowers and roots. Particularly present in vasculatures, trichome basal cells and hydatodes.

Its subcellular location is the cytoplasm. The enzyme catalyses (S)-malate + NADP(+) = pyruvate + CO2 + NADPH. It catalyses the reaction oxaloacetate + H(+) = pyruvate + CO2. With respect to regulation, activated by coenzyme A (CoA), aspartate, succinate and fumarate. Repressed by oxaloacetate, glucose and ATP. This is NADP-dependent malic enzyme 2 (NADP-ME2) from Arabidopsis thaliana (Mouse-ear cress).